Here is a 238-residue protein sequence, read N- to C-terminus: MSQPIYKRILLKLSGEALQGDEGFGIDPSILDRMALEIKGLLGLGVEVGVVLGGGNLFRGAKLAKAGMNRVVGDHMGMLATVMNGLAMRDALHRANVNAKLMSAFQLNGICDTYNWSEAIKMLCEKRVVIFSAGTGSPFFTTDSAACLRGIEIEADVVLKATKVDGVYDCDPVKNPNAVLYHKLSYAEVIEKELQVMDLAAFTLARDHNMPIRVFNMSKTGALRNVILGKTEGTLICD.

Position 12 to 15 (12 to 15) interacts with ATP; the sequence is KLSG. An involved in allosteric activation by GTP region spans residues 20–25; the sequence is GDEGFG. A UMP-binding site is contributed by Gly54. ATP-binding residues include Gly55 and Arg59. UMP is bound by residues Asp74 and 135-142; that span reads TGSPFFTT. Residues Thr162, Tyr168, and Asp171 each coordinate ATP.

This sequence belongs to the UMP kinase family. As to quaternary structure, homohexamer.

Its subcellular location is the cytoplasm. The catalysed reaction is UMP + ATP = UDP + ADP. The protein operates within pyrimidine metabolism; CTP biosynthesis via de novo pathway; UDP from UMP (UMPK route): step 1/1. Allosterically activated by GTP. Inhibited by UTP. Functionally, catalyzes the reversible phosphorylation of UMP to UDP. This chain is Uridylate kinase, found in Histophilus somni (strain 129Pt) (Haemophilus somnus).